The following is a 37-amino-acid chain: Large ribosomal subunit protein bL36 (37 aa).

The protein belongs to the bacterial ribosomal protein bL36 family.

The sequence is that of Large ribosomal subunit protein bL36 from Sulfurimonas denitrificans (strain ATCC 33889 / DSM 1251) (Thiomicrospira denitrificans (strain ATCC 33889 / DSM 1251)).